Here is a 170-residue protein sequence, read N- to C-terminus: Adenine phosphoribosyltransferase (170 aa).

The protein belongs to the purine/pyrimidine phosphoribosyltransferase family. As to quaternary structure, homodimer.

It localises to the cytoplasm. The catalysed reaction is AMP + diphosphate = 5-phospho-alpha-D-ribose 1-diphosphate + adenine. It participates in purine metabolism; AMP biosynthesis via salvage pathway; AMP from adenine: step 1/1. Its function is as follows. Catalyzes a salvage reaction resulting in the formation of AMP, that is energically less costly than de novo synthesis. The polypeptide is Adenine phosphoribosyltransferase (Mycoplasma capricolum subsp. capricolum (strain California kid / ATCC 27343 / NCTC 10154)).